Reading from the N-terminus, the 342-residue chain is MSSPISAVSQMLERNQALFVGKRLLVCGALEDDYPRQLATLTHSLTVFTTDYCYYRSQQAALGDAILFDHQLGGAPRFDALLLLMPKAKAEAQYLLAMMTPLLEAGAELFLAGENRGGINGADKLLAPYGDKPVKRDSARRCSLYHGELSKPVEPFELDSWFGRYQCQAGDTELTVLALPGVFSASELDLGSQMLLASLPAMQGSLLDFGCGAGVIGSVLAKRNPGLKVTMVDINALALESSRRTLAINGLQGEVWASDVYSDIQGKFGRIVSNPPFHAGLKTFYAATETFLAKAPDHLQSQGSLTIVANAFLRYQPILETHFKRTEVISSDAKFKVYLSKV.

The protein belongs to the methyltransferase superfamily. RsmC family. As to quaternary structure, monomer.

It localises to the cytoplasm. It carries out the reaction guanosine(1207) in 16S rRNA + S-adenosyl-L-methionine = N(2)-methylguanosine(1207) in 16S rRNA + S-adenosyl-L-homocysteine + H(+). Specifically methylates the guanine in position 1207 of 16S rRNA in the 30S particle. The sequence is that of Ribosomal RNA small subunit methyltransferase C from Aeromonas hydrophila subsp. hydrophila (strain ATCC 7966 / DSM 30187 / BCRC 13018 / CCUG 14551 / JCM 1027 / KCTC 2358 / NCIMB 9240 / NCTC 8049).